We begin with the raw amino-acid sequence, 78 residues long: Large ribosomal subunit protein bL28 (78 aa).

The segment at 1–23 (MSRVCQVTGKRPITGNNVSHSKR) is disordered.

The protein belongs to the bacterial ribosomal protein bL28 family.

The chain is Large ribosomal subunit protein bL28 from Marinomonas sp. (strain MWYL1).